We begin with the raw amino-acid sequence, 317 residues long: Transaldolase (317 aa).

Catalysis depends on Lys125, which acts as the Schiff-base intermediate with substrate.

Belongs to the transaldolase family. Type 1 subfamily. In terms of assembly, homodimer.

Its subcellular location is the cytoplasm. The catalysed reaction is D-sedoheptulose 7-phosphate + D-glyceraldehyde 3-phosphate = D-erythrose 4-phosphate + beta-D-fructose 6-phosphate. It functions in the pathway carbohydrate degradation; pentose phosphate pathway; D-glyceraldehyde 3-phosphate and beta-D-fructose 6-phosphate from D-ribose 5-phosphate and D-xylulose 5-phosphate (non-oxidative stage): step 2/3. Its function is as follows. Transaldolase is important for the balance of metabolites in the pentose-phosphate pathway. This Delftia acidovorans (strain DSM 14801 / SPH-1) protein is Transaldolase.